Consider the following 304-residue polypeptide: Triplex capsid protein 2 (304 aa).

It belongs to the herpesviridae TRX2 protein family. In terms of assembly, interacts with TRX1 and major capisd protein/MCP.

Its subcellular location is the virion. The protein localises to the host nucleus. Structural component of the T=16 icosahedral capsid. The capsid is composed of pentamers and hexamers of major capsid protein/MCP, which are linked together by heterotrimers called triplexes. These triplexes are formed by a single molecule of triplex protein 1/TRX1 and two copies of triplex protein 2/TRX2. Additionally, TRX1 is required for efficient transport of TRX2 to the nucleus, which is the site of capsid assembly. The protein is Triplex capsid protein 2 of Saimiri sciureus (Common squirrel monkey).